A 585-amino-acid chain; its full sequence is Glycerol-3-phosphate dehydrogenase 2 (585 aa).

37-65 serves as a coordination point for FAD; it reads DVVVIGGGVVGSGCALDAATRGLKVALVE.

It belongs to the FAD-dependent glycerol-3-phosphate dehydrogenase family. FAD serves as cofactor.

It localises to the cytoplasm. The enzyme catalyses a quinone + sn-glycerol 3-phosphate = dihydroxyacetone phosphate + a quinol. The sequence is that of Glycerol-3-phosphate dehydrogenase 2 (glpD2) from Mycobacterium bovis (strain ATCC BAA-935 / AF2122/97).